An 83-amino-acid chain; its full sequence is Molybdopterin synthase sulfur carrier subunit (83 aa).

The protein belongs to the MoaD family.

The protein operates within cofactor biosynthesis; molybdopterin biosynthesis. Involved in sulfur transfer in the conversion of molybdopterin precursor Z to molybdopterin. Probably plays a role in host phagosome maturation arrest. The protein is Molybdopterin synthase sulfur carrier subunit (moaD1) of Mycobacterium tuberculosis (strain ATCC 25618 / H37Rv).